A 496-amino-acid chain; its full sequence is DNA-dependent metalloprotease SPRTN (496 aa).

The residue at position 1 (M1) is an N-acetylmethionine. Positions 45-212 constitute a SprT-like domain; that stretch reads LQALFLQFND…KTCGGTYIKI (168 aa). A Zn(2+)-binding site is contributed by H111. The active site involves E112. Residues H115 and H130 each coordinate Zn(2+). At K230 the chain carries N6-acetyllysine. Residues 253 to 261 carry the SHP-box motif; it reads FSGKGYVLG. The residue at position 268 (S268) is a Phosphoserine. K303 participates in a covalent cross-link: Glycyl lysine isopeptide (Lys-Gly) (interchain with G-Cter in SUMO2). A PIP-box motif is present at residues 326–333; the sequence is QSVLSSYF. Residue K342 forms a Glycyl lysine isopeptide (Lys-Gly) (interchain with G-Cter in SUMO2); alternate linkage. A Glycyl lysine isopeptide (Lys-Gly) (interchain with G-Cter in ubiquitin); alternate cross-link involves residue K342. A disordered region spans residues 346–459; the sequence is NVNGSPVKSG…STPRSSGGQR (114 aa). A Glycyl lysine isopeptide (Lys-Gly) (interchain with G-Cter in SUMO2) cross-link involves residue K361. Positions 382-403 are enriched in low complexity; sequence SSKVTAPASATVTSAAGTSAAI. Position 383 is a phosphoserine (S383). Residues 412-423 carry the Nuclear localization signal motif; the sequence is DQFLNKRPRLED. 2 stretches are compositionally biased toward polar residues: residues 426–437 and 445–457; these read ALNNIKEQTQSG and RPTA…SSGG. Residue K431 forms a Glycyl lysine isopeptide (Lys-Gly) (interchain with G-Cter in SUMO2) linkage. A UBZ4-type zinc finger spans residues 461-488; that stretch reads LVNCPVCQGVVLESQINEHLDRCLEGSK. Zn(2+) contacts are provided by C464, C467, H479, and C483.

Belongs to the Spartan family. In terms of assembly, homodimer. Interacts (VIA PIP-box) with PCNA (when ubiquitinated). Interacts (via its SHP-box) with VCP/p97. Interacts with RAD18. Interacts with KCTD13 and POLD3. Requires Zn(2+) as cofactor. In terms of processing, autocatalytically cleaved in response to double-stranded DNA-binding: autocatalytic cleavage takes place in trans and leads to inactivation. Post-translationally, monoubiquitinated; monoubiquitination promotes exclusion from chromatin. Deubiquitinated by VCPIP1: deubiquitination is required for subsequent acetylation and recruitment to chromatin and DNA damage sites. Acetylated following deubiquitination by VCPIP1, leading to recruitment to chromatin and DNA damage sites. In terms of processing, phosphorylation by CHEK1 promotes recruitment to chromatin.

The protein resides in the nucleus. It localises to the chromosome. Its activity is regulated as follows. DNA-binding activates the protease activity: single-stranded DNA-binding specifically activates ability to cleave covalent DNA-protein cross-links (DPCs). In contrast, double-stranded DNA-binding specifically activates autocatalytic cleavage, and subsequent inactivation. In terms of biological role, DNA-dependent metalloendopeptidase that mediates the proteolytic cleavage of covalent DNA-protein cross-links (DPCs) during DNA synthesis, thereby playing a key role in maintaining genomic integrity. DPCs are highly toxic DNA lesions that interfere with essential chromatin transactions, such as replication and transcription, and which are induced by reactive agents, such as UV light or formaldehyde. Associates with the DNA replication machinery and specifically removes DPCs during DNA synthesis. Catalyzes proteolytic cleavage of the HMCES DNA-protein cross-link following unfolding by the BRIP1/FANCJ helicase. Acts as a pleiotropic protease for DNA-binding proteins cross-linked with DNA, such as TOP1, TOP2A, histones H3 and H4. Mediates degradation of DPCs that are not ubiquitinated, while it is not able to degrade ubiquitinated DPCs. SPRTN activation requires polymerase collision with DPCs followed by helicase bypass of DPCs. Involved in recruitment of VCP/p97 to sites of DNA damage. Also acts as an activator of CHEK1 during normal DNA replication by mediating proteolytic cleavage of CHEK1, thereby promoting CHEK1 removal from chromatin and subsequent activation. Does not activate CHEK1 in response to DNA damage. May also act as a 'reader' of ubiquitinated PCNA: recruited to sites of UV damage and interacts with ubiquitinated PCNA and RAD18, the E3 ubiquitin ligase that monoubiquitinates PCNA. Facilitates chromatin association of RAD18 and is required for efficient PCNA monoubiquitination, promoting a feed-forward loop to enhance PCNA ubiquitination and translesion DNA synthesis. This is DNA-dependent metalloprotease SPRTN from Rattus norvegicus (Rat).